The following is a 449-amino-acid chain: Monoacylglycerol lipase (449 aa).

A Glycyl lysine isopeptide (Lys-Gly) (interchain with G-Cter in ubiquitin) cross-link involves residue Lys82. Residues 151–392 (PMLIILHGLT…LLLETSTGGH (242 aa)) form the AB hydrolase-1 domain. The GXSXG motif lies at 230–234 (GFSLG). Ser232 functions as the Nucleophile in the catalytic mechanism. Residues Asp364 and His392 each act as charge relay system in the active site.

This sequence belongs to the AB hydrolase superfamily. AB hydrolase 4 family.

The enzyme catalyses Hydrolyzes glycerol monoesters of long-chain fatty acids.. It carries out the reaction 1-hexadecanoylglycerol + H2O = glycerol + hexadecanoate + H(+). It catalyses the reaction 1-octadecanoylglycerol + H2O = octadecanoate + glycerol + H(+). The catalysed reaction is 1-(9Z-octadecenoyl)-glycerol + H2O = glycerol + (9Z)-octadecenoate + H(+). Functionally, converts monoacylglycerides (MAG) to free fatty acids and glycerol. Has a preference for palmitoyl-MAG. Does not play a significant role in ethyl ester biosynthesis. Also possesses ester hydrolase and low but persistent TAG lipase activity. The polypeptide is Monoacylglycerol lipase (Saccharomyces cerevisiae (strain ATCC 204508 / S288c) (Baker's yeast)).